The following is an 876-amino-acid chain: Leucine--tRNA ligase (876 aa).

The short motif at 43 to 53 (PYPSGRIHMGH) is the 'HIGH' region element. The 'KMSKS' region motif lies at 632-636 (KMSKS). Lys-635 serves as a coordination point for ATP.

Belongs to the class-I aminoacyl-tRNA synthetase family.

It localises to the cytoplasm. It carries out the reaction tRNA(Leu) + L-leucine + ATP = L-leucyl-tRNA(Leu) + AMP + diphosphate. The polypeptide is Leucine--tRNA ligase (Sinorhizobium fredii (strain NBRC 101917 / NGR234)).